The chain runs to 926 residues: Staphylococcal nuclease domain-containing protein 1 (926 aa).

Residues 1 to 17 (MATAANTATAAGAAKDA) are compositionally biased toward low complexity. The interval 1-24 (MATAANTATAAGAAKDAPPAPTKS) is disordered. 4 TNase-like domains span residues 23-167 (KSLS…KWSP), 195-333 (NPVK…QWQD), 346-505 (KDFS…LHAK), and 535-674 (LRTE…IWTN). The 59-residue stretch at 749–807 (TPKRGDLVAAQFTLDNQWYRAKVERVQGSNATVLYIDYGNKETLPTNRLAALPPAFSSE) folds into the Tudor domain. The interval 760 to 788 (FTLDNQWYRAKVERVQGSNATVLYIDYGN) is involved in dimethylarginine binding.

As to quaternary structure, associates with the RNA-induced silencing complex (RISC). Interacts with the RISC components AGO2, Fmr1 and vig. Interacts with piwi. In terms of tissue distribution, expressed in adult ovaries and testis (at protein level).

It is found in the cytoplasm. The protein resides in the nucleus. It catalyses the reaction Endonucleolytic cleavage to nucleoside 3'-phosphates and 3'-phosphooligonucleotide end-products.. In terms of biological role, endonuclease which shows activity towards both DNA and RNA substrates. Has a role in translation regulation throught its association with the with the RNA-induced silencing complex (RISC). Plays a role in spermatogenesis probably by negatively regulating piwi expression in the germline. Together with piwi, might be involved in transposon repression in the germline. The chain is Staphylococcal nuclease domain-containing protein 1 from Drosophila melanogaster (Fruit fly).